The chain runs to 361 residues: Anthranilate phosphoribosyltransferase (361 aa).

5-phospho-alpha-D-ribose 1-diphosphate contacts are provided by residues Gly101, Gly104–Asp105, Thr109, Asn111–Thr114, Lys129–Ser137, and Ser141. Gly101 provides a ligand contact to anthranilate. Ser113 contributes to the Mg(2+) binding site. Asn132 contributes to the anthranilate binding site. Arg187 is an anthranilate binding site. Mg(2+)-binding residues include Asp245 and Glu246.

This sequence belongs to the anthranilate phosphoribosyltransferase family. In terms of assembly, homodimer. It depends on Mg(2+) as a cofactor.

It carries out the reaction N-(5-phospho-beta-D-ribosyl)anthranilate + diphosphate = 5-phospho-alpha-D-ribose 1-diphosphate + anthranilate. It participates in amino-acid biosynthesis; L-tryptophan biosynthesis; L-tryptophan from chorismate: step 2/5. Functionally, catalyzes the transfer of the phosphoribosyl group of 5-phosphorylribose-1-pyrophosphate (PRPP) to anthranilate to yield N-(5'-phosphoribosyl)-anthranilate (PRA). The sequence is that of Anthranilate phosphoribosyltransferase from Shewanella denitrificans (strain OS217 / ATCC BAA-1090 / DSM 15013).